We begin with the raw amino-acid sequence, 288 residues long: 4-diphosphocytidyl-2-C-methyl-D-erythritol kinase (288 aa).

The active site involves Lys-10. Pro-94–Ser-104 lines the ATP pocket. The active site involves Asp-136.

This sequence belongs to the GHMP kinase family. IspE subfamily.

It carries out the reaction 4-CDP-2-C-methyl-D-erythritol + ATP = 4-CDP-2-C-methyl-D-erythritol 2-phosphate + ADP + H(+). The protein operates within isoprenoid biosynthesis; isopentenyl diphosphate biosynthesis via DXP pathway; isopentenyl diphosphate from 1-deoxy-D-xylulose 5-phosphate: step 3/6. Functionally, catalyzes the phosphorylation of the position 2 hydroxy group of 4-diphosphocytidyl-2C-methyl-D-erythritol. The sequence is that of 4-diphosphocytidyl-2-C-methyl-D-erythritol kinase from Lactiplantibacillus plantarum (strain ATCC BAA-793 / NCIMB 8826 / WCFS1) (Lactobacillus plantarum).